A 138-amino-acid chain; its full sequence is MRTLWIVAVCLIGVEGSLLEFGMMILGETGKNPLTSYSFYGCYCGVGGKGTPKDATDRCCFVHDCCYGNLPDCSPKTDRYKYHRENGAIVCGKGTSCENRICECDRAAAICFRKNLKTYNYIYRNYPDILCKEESEKC.

The first 16 residues, 1–16, serve as a signal peptide directing secretion; the sequence is MRTLWIVAVCLIGVEG. 7 cysteine pairs are disulfide-bonded: cysteine 42–cysteine 131, cysteine 44–cysteine 60, cysteine 59–cysteine 111, cysteine 65–cysteine 138, cysteine 66–cysteine 104, cysteine 73–cysteine 97, and cysteine 91–cysteine 102. Ca(2+)-binding residues include tyrosine 43, glycine 45, and glycine 47. Histidine 63 is a catalytic residue. Aspartate 64 serves as a coordination point for Ca(2+). The active site involves aspartate 105.

It belongs to the phospholipase A2 family. Group II subfamily. D49 sub-subfamily. As to quaternary structure, monomer. Binds to calmodulin, coagulation factor X (F10), 14-3-3 proteins gamma (YWHAG) and epsilon (YWHAE), and R25, a mitochondrial membrane protein. May bind to M-type PLA2 receptor (R-180). Ca(2+) is required as a cofactor. In terms of tissue distribution, expressed by the venom gland.

The protein resides in the secreted. It is found in the host cytoplasm. Its subcellular location is the host cytosol. It catalyses the reaction a 1,2-diacyl-sn-glycero-3-phosphocholine + H2O = a 1-acyl-sn-glycero-3-phosphocholine + a fatty acid + H(+). In terms of biological role, snake venom phospholipase A2 (PLA2) that acts as a presynaptic neurotoxin, an inhibitor of blood coagulation, and has been found to bind with high affinity to intracellular proteins. The response of indirectly stimulated neuromuscular preparations to ammodytoxin (Atx) is triphasic. The first phase, the transient inhibition of the acetylcholine (ACh) release, starts soon after the addition of Atx and lasts for several minutes. This phase is probably independent of Atx enzymatic activity. The effect may be due to the specific binding of the toxin to presynaptic receptors. These receptors, called N-type receptors, are still unidentified. It is noteworthy that a neuronal isoform of the M-type PLA2 receptor (R180) has been identified as a high-affinity receptor for Atx in neuronal plasma membranes. It was demonstrated however that this receptor is not essential for expression of neurotoxicity by Atx. The second phase corresponds to an augmentation of neurotransmitter release. A peak is reached 10-20 minutes after exposure of the preparation to Atx and is followed by a gradual reduction. In this phase, the enzymatic activity of Atx of the mammalian is not significant. It is speculated that the increased release of neurotransmitter in this phase is induced by the interference of Atx with voltage-gated potassium channels. Measurements of ionic showed however that voltage-gated potassium channels are not affected by Atx. The third phase of the response of neuromuscular preparations to Atx, which corresponds to a complete and irreversible paralysis, is clearly dependent on the hydrolytic activity of the toxin. In addition to its presynaptic neurotoxicity, Atx shows an anticoagulant activity by binding with high affinity to activated coagulation factor X (F10) thus inhibiting the formation of the prothrombinase complex (FX/FV) and its activity (IC(50) is 240 nM). Surprisingly, Atx was discovered to bind intracellular proteins such as calmodulin (CaM), 14-3-3 proteins gamma (YWHAG) and epsilon (YWHAE), as well as R25, a mitochondrial integral membrane protein found in cerebral cortex. These findings raised a doubt about the dogma of the exclusively extracellular action of PLA2s, defended by the potential instability of these molecules in the reducing environment of the eukaryotic cytosol coupled with their possible inability to act as enzymes in this cellular compartment, due to too low concentration of calcium ions. This hypothesis was challenged efficiently by demonstrating the internalization of AtxA into a culture cells, but still remains to be directly demonstrated in vivo. PLA2 catalyzes the calcium-dependent hydrolysis of the 2-acyl groups in 3-sn-phosphoglycerides. The polypeptide is Basic phospholipase A2 ammodytoxin C (Vipera ammodytes ammodytes (Western sand viper)).